The chain runs to 62 residues: Sec-independent protein translocase protein TatA (62 aa).

Residues methionine 1–glycine 21 form a helical membrane-spanning segment.

The protein belongs to the TatA/E family. As to quaternary structure, the Tat system comprises two distinct complexes: a TatABC complex, containing multiple copies of TatA, TatB and TatC subunits, and a separate TatA complex, containing only TatA subunits. Substrates initially bind to the TatABC complex, which probably triggers association of the separate TatA complex to form the active translocon.

The protein resides in the cell inner membrane. Functionally, part of the twin-arginine translocation (Tat) system that transports large folded proteins containing a characteristic twin-arginine motif in their signal peptide across membranes. TatA could form the protein-conducting channel of the Tat system. The protein is Sec-independent protein translocase protein TatA of Oleidesulfovibrio alaskensis (strain ATCC BAA-1058 / DSM 17464 / G20) (Desulfovibrio alaskensis).